Here is a 225-residue protein sequence, read N- to C-terminus: UPF0758 protein Shewmr7_0359 (225 aa).

In terms of domain architecture, MPN spans 102 to 224; it reads VLTNPDLTRD…IVSFAERGWI (123 aa). Zn(2+) contacts are provided by His173, His175, and Asp186. Residues 173–186 carry the JAMM motif motif; the sequence is HNHPSGIAEPSQAD.

Belongs to the UPF0758 family.

The polypeptide is UPF0758 protein Shewmr7_0359 (Shewanella sp. (strain MR-7)).